We begin with the raw amino-acid sequence, 159 residues long: Succinate dehydrogenase [ubiquinone] cytochrome b small subunit, mitochondrial (159 aa).

Residues 1 to 56 (MAVLLKLGVLCSGQGARALLLRSRVVRPAYVSAFLQDQPTQGRCGTQHIHLSPSHH) constitute a mitochondrion transit peptide. Residues 57-63 (SGSKAAS) lie on the Mitochondrial matrix side of the membrane. The chain crosses the membrane as a helical span at residues 64-85 (LHWTSERVVSVLLLGLIPAGYL). Topologically, residues 86 to 90 (NPCSV) are mitochondrial intermembrane. The chain crosses the membrane as a helical span at residues 91–111 (VDYSLAAALTLHSHWGLGQVV). Heme b is bound at residue histidine 102. Topologically, residues 112–120 (TDYVHGDTL) are mitochondrial matrix. Tyrosine 114 is an a ubiquinone binding site. Residues 121 to 142 (PKAARAGLLALSALTFAGLCYF) form a helical membrane-spanning segment. Residues 143–159 (NYHDVGICRAVAMLWKL) are Mitochondrial intermembrane-facing.

Belongs to the CybS family. As to quaternary structure, component of complex II composed of four subunits: the flavoprotein (FP) SDHA, iron-sulfur protein (IP) SDHB, and a cytochrome b560 composed of SDHC and SDHD.

It localises to the mitochondrion inner membrane. It functions in the pathway carbohydrate metabolism; tricarboxylic acid cycle. Functionally, membrane-anchoring subunit of succinate dehydrogenase (SDH) that is involved in complex II of the mitochondrial electron transport chain and is responsible for transferring electrons from succinate to ubiquinone (coenzyme Q). SDH also oxidizes malate to the non-canonical enol form of oxaloacetate, enol-oxaloacetate. Enol-oxaloacetate, which is a potent inhibitor of the succinate dehydrogenase activity, is further isomerized into keto-oxaloacetate. The protein is Succinate dehydrogenase [ubiquinone] cytochrome b small subunit, mitochondrial (Sdhd) of Mus musculus (Mouse).